Reading from the N-terminus, the 165-residue chain is Protein SprT (165 aa).

In terms of domain architecture, SprT-like spans 10-157; that stretch reads EACYRQAEDF…YCRRCKATLV (148 aa). A Zn(2+)-binding site is contributed by H69. The active site involves E70. Residue H73 coordinates Zn(2+).

Belongs to the SprT family. Zn(2+) is required as a cofactor.

It localises to the cytoplasm. This chain is Protein SprT, found in Pseudomonas paraeruginosa (strain DSM 24068 / PA7) (Pseudomonas aeruginosa (strain PA7)).